The sequence spans 267 residues: uncharacterized protein (267 aa).

The stretch at 50–90 (PGLNAVTASKFSPDGRWLLNIADGSGYVQLWDTAKGERVKT) is one WD repeat.

This is an uncharacterized protein from Deinococcus radiodurans (strain ATCC 13939 / DSM 20539 / JCM 16871 / CCUG 27074 / LMG 4051 / NBRC 15346 / NCIMB 9279 / VKM B-1422 / R1).